The chain runs to 99 residues: Protein translation factor SUI1 homolog (99 aa).

It belongs to the SUI1 family.

This is Protein translation factor SUI1 homolog from Sulfolobus acidocaldarius (strain ATCC 33909 / DSM 639 / JCM 8929 / NBRC 15157 / NCIMB 11770).